Consider the following 282-residue polypeptide: Phosphatidylserine decarboxylase proenzyme (282 aa).

Residues Asp-85, His-142, and Ser-244 each act as charge relay system; for autoendoproteolytic cleavage activity in the active site. Catalysis depends on Ser-244, which acts as the Schiff-base intermediate with substrate; via pyruvic acid; for decarboxylase activity. Pyruvic acid (Ser); by autocatalysis is present on Ser-244.

Belongs to the phosphatidylserine decarboxylase family. PSD-B subfamily. Prokaryotic type I sub-subfamily. Heterodimer of a large membrane-associated beta subunit and a small pyruvoyl-containing alpha subunit. It depends on pyruvate as a cofactor. Is synthesized initially as an inactive proenzyme. Formation of the active enzyme involves a self-maturation process in which the active site pyruvoyl group is generated from an internal serine residue via an autocatalytic post-translational modification. Two non-identical subunits are generated from the proenzyme in this reaction, and the pyruvate is formed at the N-terminus of the alpha chain, which is derived from the carboxyl end of the proenzyme. The autoendoproteolytic cleavage occurs by a canonical serine protease mechanism, in which the side chain hydroxyl group of the serine supplies its oxygen atom to form the C-terminus of the beta chain, while the remainder of the serine residue undergoes an oxidative deamination to produce ammonia and the pyruvoyl prosthetic group on the alpha chain. During this reaction, the Ser that is part of the protease active site of the proenzyme becomes the pyruvoyl prosthetic group, which constitutes an essential element of the active site of the mature decarboxylase.

The protein localises to the cell membrane. The catalysed reaction is a 1,2-diacyl-sn-glycero-3-phospho-L-serine + H(+) = a 1,2-diacyl-sn-glycero-3-phosphoethanolamine + CO2. Its pathway is phospholipid metabolism; phosphatidylethanolamine biosynthesis; phosphatidylethanolamine from CDP-diacylglycerol: step 2/2. Functionally, catalyzes the formation of phosphatidylethanolamine (PtdEtn) from phosphatidylserine (PtdSer). The protein is Phosphatidylserine decarboxylase proenzyme of Coxiella burnetii (strain Dugway 5J108-111).